A 488-amino-acid chain; its full sequence is Cruciferin (488 aa).

The N-terminal stretch at 1–23 (MARLSSLLSFSLALLTFLHGSTA) is a signal peptide. Disulfide bonds link cysteine 30–cysteine 63 and cysteine 105–cysteine 305. Cupin type-1 domains follow at residues 35-262 (LNAL…RTAQ) and 311-460 (DNLD…EEAR). Residues 116-163 (QPSGGSPFGEGQGQGQQGQGQGHQGQGQGQQGQQGQQGQQSQGQGFRD) are disordered. Over residues 121 to 147 (SPFGEGQGQGQQGQGQGHQGQGQGQQG) the composition is skewed to gly residues. The segment covering 148–160 (QQGQQGQQSQGQG) has biased composition (low complexity).

Belongs to the 11S seed storage protein (globulins) family. In terms of assembly, hexamer; each subunit is composed of an acidic and a basic chain derived from a single precursor and linked by a disulfide bond.

It localises to the rough endoplasmic reticulum. This is a seed storage protein. The chain is Cruciferin (CRUA) from Brassica napus (Rape).